A 214-amino-acid polypeptide reads, in one-letter code: Small ribosomal subunit protein uS5 (214 aa).

The S5 DRBM domain maps to 55–118; the sequence is LKYERLDVGI…RNAKLNITPV (64 aa).

It belongs to the universal ribosomal protein uS5 family. As to quaternary structure, part of the 30S ribosomal subunit. Contacts protein S4.

In terms of biological role, with S4 and S12 plays an important role in translational accuracy. This Staphylothermus marinus (strain ATCC 43588 / DSM 3639 / JCM 9404 / F1) protein is Small ribosomal subunit protein uS5.